The following is an 827-amino-acid chain: SH3-containing GRB2-like protein 3-interacting protein 1 (827 aa).

Disordered stretches follow at residues 1 to 115, 142 to 205, and 223 to 278; these read MMEG…ESHK, SIGN…GPPL, and IWGS…QAAT. Basic and acidic residues-rich tracts occupy residues 16–32 and 40–54; these read RKKE…DRDG and PPYH…EGGK. Phosphoserine is present on residues Ser-78, Ser-104, Ser-105, Ser-107, Ser-149, Ser-151, Ser-156, and Ser-169. Residues Thr-180 and Thr-182 each carry the phosphothreonine modification. The residue at position 236 (Ser-236) is a Phosphoserine. A compositionally biased stretch (pro residues) spans 245 to 260; sequence TGTPPPLPPKAVPATP. Phosphothreonine is present on residues Thr-247 and Thr-259. Phosphoserine occurs at positions 265, 287, 289, 300, 316, and 319. A compositionally biased stretch (polar residues) spans 265–276; sequence SPLTVATGNDQA. Residues 314–333 are compositionally biased toward basic and acidic residues; it reads HFSDASPEHVTPELTPREKV. Residues 314-523 are disordered; that stretch reads HFSDASPEHV…LSAATTPTVE (210 aa). Phosphothreonine occurs at positions 324, 328, and 335. Positions 336-345 are enriched in low complexity; it reads PPAASDIPAD. Over residues 346–369 the composition is skewed to pro residues; that stretch reads SPAPGPPGPPGSAGPPGPPGPRHV. Ser-371 is modified (phosphoserine). Over residues 377-392 the composition is skewed to basic and acidic residues; sequence EVQKKVAEQTFIKDDY. A Phosphoserine modification is found at Ser-398. Thr-409 carries the phosphothreonine modification. Over residues 436-455 the composition is skewed to low complexity; sequence ASGASSPARPATPLVPCSST. Residues 456 to 474 are compositionally biased toward pro residues; it reads TPPPPPPRPPSRPKLPPGK. Low complexity-rich tracts occupy residues 481-491 and 498-521; these read SRPFSPPIHSS and PLAR…TTPT. Ser-485 is modified (phosphoserine). The region spanning 558 to 826 is the MHD domain; that stretch reads TLPVAAAFTE…RFAAGKYLAD (269 aa). 4 interaction with DPF motifs-containing proteins regions span residues 560–566, 592–594, 666–669, and 812–817; these read PVAAAFT, SFP, TYYN, and SLIKKR. The segment at 648–827 is necessary and sufficient to mediate interaction with CANX; sequence MPNLMTHLKK…FAAGKYLADN (180 aa).

In terms of assembly, interacts with proteins essential or regulating the formation of functional clathrin-coated pits. Interacts with CANX. Interacts with AP2A1. Interacts with EPS15. Interacts with SH3GL3. Interacts with AMPH. Interacts with ITSN1 (via SH3 domains). Interacts with and REPS1. As to expression, specifically expressed in brain (at protein level).

It localises to the membrane. The protein resides in the clathrin-coated pit. Its function is as follows. May function in clathrin-mediated endocytosis. Has both a membrane binding/tubulating activity and the ability to recruit proteins essential to the formation of functional clathrin-coated pits. Has a preference for membranes enriched in phosphatidylserine and phosphoinositides and is required for the endocytosis of the transferrin receptor. May also bind tubulin. May play a role in the regulation of energy homeostasis. This Rattus norvegicus (Rat) protein is SH3-containing GRB2-like protein 3-interacting protein 1 (Sgip1).